A 550-amino-acid polypeptide reads, in one-letter code: MFCVQCEQTIRTPAGNGCSYAQGMCGKTAETSDLQDLLIAALQGLSAWAVKAREYGIINHDVDSFAPRAFFSTLTNVNFDSPRIVGYAREAIALREALKAQCLAVDANARVDNPMADLQLVSDDPGELQRQAAEFTPNKDKAAIGENILGLRLLCLYGLKGAAAYMEHAHVLGQYDNDIYAQYHKIMAWLGTWPADMNALLECSMEIGQMNFKVMSILDAGETGKYGHPTPTQVNVKATAGKCILISGHDLKDLYNLLEQTEGTGVNVYTHGEMLPAHGYPELRKFKHLVGNYGSGWQNQQVEFARFPGPIVMTSNCIIDPTVGAYDDRIWTRSIVGWPGVRHLDGDDFSAVIAQAQQMAGFPYSEIPHLITVGFGRQTLLDAADTLIDLVSREKLRHIFLLGGCDGARGERHYFTDFATSVPDDCLILTLACGKYRFNKLEFGDIEGLPRLVDAGQCNDAYSAIILAVTLAEKLGCGVNDLPLSLVLSWFEQKAIVILLTLLSLGVKNIVTGPTAPGFLTPDLLAVLNEKFGLRSITTVEEDMKQLLSA.

4 residues coordinate [2Fe-2S] cluster: C3, C6, C18, and C25. The hybrid [4Fe-2O-2S] cluster site is built by H249, E273, C317, C405, C433, C458, E492, and K494. Position 405 is a cysteine persulfide (C405).

The protein belongs to the HCP family. The cofactor is [2Fe-2S] cluster. Hybrid [4Fe-2O-2S] cluster serves as cofactor.

It localises to the cytoplasm. It catalyses the reaction A + NH4(+) + H2O = hydroxylamine + AH2 + H(+). Functionally, catalyzes the reduction of hydroxylamine to form NH(3) and H(2)O. The sequence is that of Hydroxylamine reductase from Escherichia fergusonii (strain ATCC 35469 / DSM 13698 / CCUG 18766 / IAM 14443 / JCM 21226 / LMG 7866 / NBRC 102419 / NCTC 12128 / CDC 0568-73).